The sequence spans 386 residues: Trichocyst matrix protein T2-B (386 aa).

A signal peptide spans 1 to 19 (MKTIILALALIALVSSTQS). The propeptide occupies 20–48 (DVIDTIKKIDQSPFGRTLFDTIWLELQTG). A coiled-coil region spans residues 51–154 (LDRLVSTLTD…AEEHEDFEEK (104 aa)). Positions 184–238 (KGKAAKQPHKFTKDVANLIQKHFTTSAKKTAKFQHRKGYSKLFKAFATIASKVEQ) are excised as a propeptide. Positions 294–325 (ALANAISDLAALNDIIAQVEASLDTTVQRIEN) form a coiled coil.

Belongs to the TMP family.

It is found in the trichocyst. Functionally, structural protein that crystallize inside the trichocyst matrix. The sequence is that of Trichocyst matrix protein T2-B (T2B) from Paramecium tetraurelia.